A 121-amino-acid chain; its full sequence is Large ribosomal subunit protein bL12 (121 aa).

Belongs to the bacterial ribosomal protein bL12 family. As to quaternary structure, homodimer. Part of the ribosomal stalk of the 50S ribosomal subunit. Forms a multimeric L10(L12)X complex, where L10 forms an elongated spine to which 2 to 4 L12 dimers bind in a sequential fashion. Binds GTP-bound translation factors.

In terms of biological role, forms part of the ribosomal stalk which helps the ribosome interact with GTP-bound translation factors. Is thus essential for accurate translation. This Streptococcus uberis (strain ATCC BAA-854 / 0140J) protein is Large ribosomal subunit protein bL12.